The primary structure comprises 127 residues: Small ribosomal subunit protein uS11 (127 aa).

This sequence belongs to the universal ribosomal protein uS11 family. In terms of assembly, part of the 30S ribosomal subunit. Interacts with proteins S7 and S18. Binds to IF-3.

Located on the platform of the 30S subunit, it bridges several disparate RNA helices of the 16S rRNA. Forms part of the Shine-Dalgarno cleft in the 70S ribosome. The polypeptide is Small ribosomal subunit protein uS11 (Anaeromyxobacter dehalogenans (strain 2CP-C)).